We begin with the raw amino-acid sequence, 302 residues long: MRSSIHASRLRKMGQSIPASTGPMARSANRFLQNRAAIFGLVLLTPLLFAVLTYPLWLPYKPNDIDLMAMNSAPSWKHWFGTDGVGRDVFARTMEGGRISLLVAVSSVVLSTAIGFLIGAISALGGRWADAIAMRSVDLAMTLPPVIFLLVLASIIGSGIWSTVVVIALLSWPVLSRMIRARLLELREREFVMASRGMGAGLGHLLFRHGLPNSIDILVVYATLQVANAILLEAGLSFLGLGVPPPAASWSNMLNAARSTAVLEQFPWQWLFPGGALVLAVLAINFIGDGLRDAFDPRAELN.

A disordered region spans residues 1–22; sequence MRSSIHASRLRKMGQSIPASTG. 5 helical membrane passes run 38–58, 101–121, 147–167, 230–250, and 268–288; these read IFGL…PLWL, LLVA…IGAI, IFLL…VVVI, ILLE…AASW, and WQWL…NFIG. In terms of domain architecture, ABC transmembrane type-1 spans 97-288; that stretch reads GRISLLVAVS…LAVLAINFIG (192 aa).

This sequence belongs to the binding-protein-dependent transport system permease family. The complex is composed of two ATP-binding proteins (BMEII0863 and BMEII0864), two transmembrane proteins (BMEII0860 and BMEII0861) and a solute-binding protein (BMEII0859).

It is found in the cell inner membrane. Its function is as follows. Probably part of an ABC transporter complex that could be involved in peptide import. Probably responsible for the translocation of the substrate across the membrane. In Brucella melitensis biotype 1 (strain ATCC 23456 / CCUG 17765 / NCTC 10094 / 16M), this protein is Putative peptide permease protein BMEII0861.